A 243-amino-acid polypeptide reads, in one-letter code: Ornithine decarboxylase antizyme 3 (243 aa).

A phosphoserine mark is found at Ser6, Ser9, and Ser12.

This sequence belongs to the ODC antizyme family. Interacts with ODC1 and thereby sterically blocks ODC homodimerization. Interacts with AZIN2; this interaction disrupts the interaction between the antizyme and ODC1. Interacts with GGN. Isoform 2 interacts with PPP1R16A; Modulates PPP1CB activity. In terms of tissue distribution, testis-specific. Isoform 2 is expressed in outer dense fibers, fibrous sheath and the connecting piece of sperm.

Its subcellular location is the nucleus. The protein resides in the cytoplasm. The protein localises to the cell projection. It localises to the cilium. It is found in the flagellum. Ornithine decarboxylase (ODC) antizyme protein that negatively regulates ODC activity and intracellular polyamine biosynthesis and uptake in response to increased intracellular polyamine levels. Binds to ODC monomers, inhibiting the assembly of the functional ODC homodimers. Does not target the ODC monomers for degradation, which allows a protein synthesis-independent restoration of ODC activity. Stabilizes AZIN2 by interfering with its ubiquitination. Involved in the translocation of AZNI2 from ER-Golgi intermediate compartment (ERGIC) to the cytosol. Probably plays a key role in spermatogenesis by regulating the intracellular concentration of polyamines in haploid germ cells. Functionally, does not possess antizyme activity. Modulates PPP1CB activity through its interaction with PPP1R16A. This Rattus norvegicus (Rat) protein is Ornithine decarboxylase antizyme 3.